A 253-amino-acid polypeptide reads, in one-letter code: Decarboxylase DEC1 (253 aa).

The active-site Schiff-base intermediate with acetoacetate is the Lys121.

Belongs to the ADC family.

It participates in mycotoxin biosynthesis. Functionally, decarboxylase; part of the Tox1B locus, one of the 2 loci that mediate the biosynthesis of T-toxin, a family of linear polyketides 37 to 45 carbons in length, of which the major component is 41 carbons, and which leads to high virulence to maize. One of the PKSs (PKS1 or PKS2) could synthesize a precursor, used subsequently by the other PKS as starter unit, to add additional carbons. Variability in the length of the final carbon backbone C35-47 could be achieved by varying the number of condensation cycles, or use of different starter or extender units or might be due to decarboxylation of the penultimate product, catalyzed by DEC1. Additional proteins are required for the biosynthesis of T-toxin, including oxidoreductases RED1, RED2, RED3, LAM1 and OXI1, as well as esterase TOX9. In Cochliobolus heterostrophus (strain C4 / ATCC 48331 / race T) (Southern corn leaf blight fungus), this protein is Decarboxylase DEC1.